We begin with the raw amino-acid sequence, 82 residues long: Ranatensin (82 aa).

The signal sequence occupies residues 1-27 (MTTIPAIGILPIDFLTILLLFSFISHS). Residues 28-47 (VCVEFAEDAGELDKSNAFRR) constitute a propeptide that is removed on maturation. The residue at position 58 (methionine 58) is a Methionine amide. A propeptide spanning residues 62–82 (SLSDDTEQATMYSSRFVESTS) is cleaved from the precursor.

Belongs to the bombesin/neuromedin-B/ranatensin family. In terms of tissue distribution, expressed by the skin glands.

Its subcellular location is the secreted. This Lithobates pipiens (Northern leopard frog) protein is Ranatensin.